The following is a 414-amino-acid chain: tRNA methyltransferase 10 homolog C (414 aa).

The transit peptide at 1-35 (MNVTVRFLRPFARYLVPYTFHRTRSNSYSRVLQRY) directs the protein to the mitochondrion. At Ser79 the chain carries Phosphoserine. Residues 133–162 (GKEMMKKAKQMKKEMKAAAREEAKRARSLE) adopt a coiled-coil conformation. Residues 186–378 (LGWKGVQAMQ…KFVPRRKHTG (193 aa)) enclose the SAM-dependent MTase TRM10-type domain.

Belongs to the class IV-like SAM-binding methyltransferase superfamily. TRM10 family. Component of mitochondrial ribonuclease P, a complex composed of TRMT10C/MRPP1, HSD17B10/MRPP2 and PRORP/MRPP3. Interacts with HSD17B10/MRPP2; forming the MRPP1-MRPP2 subcomplex of the mitochondrial ribonuclease P complex. Interacts with GRSF1.

Its subcellular location is the mitochondrion matrix. It localises to the mitochondrion nucleoid. It catalyses the reaction adenosine(9) in tRNA + S-adenosyl-L-methionine = N(1)-methyladenosine(9) in tRNA + S-adenosyl-L-homocysteine + H(+). The enzyme catalyses guanosine(9) in tRNA + S-adenosyl-L-methionine = N(1)-methylguanosine(9) in tRNA + S-adenosyl-L-homocysteine + H(+). It carries out the reaction an adenosine in mRNA + S-adenosyl-L-methionine = an N(1)-methyladenosine in mRNA + S-adenosyl-L-homocysteine + H(+). In terms of biological role, mitochondrial tRNA N(1)-methyltransferase involved in mitochondrial tRNA maturation. Component of mitochondrial ribonuclease P, a complex composed of TRMT10C/MRPP1, HSD17B10/MRPP2 and PRORP/MRPP3, which cleaves tRNA molecules in their 5'-ends. Together with HSD17B10/MRPP2, forms a subcomplex of the mitochondrial ribonuclease P, named MRPP1-MRPP2 subcomplex, which displays functions that are independent of the ribonuclease P activity. The MRPP1-MRPP2 subcomplex catalyzes the formation of N(1)-methylguanine and N(1)-methyladenine at position 9 (m1G9 and m1A9, respectively) in tRNAs; TRMT10C/MRPP1 acting as the catalytic N(1)-methyltransferase subunit. The MRPP1-MRPP2 subcomplex also acts as a tRNA maturation platform: following 5'-end cleavage by the mitochondrial ribonuclease P complex, the MRPP1-MRPP2 subcomplex enhances the efficiency of 3'-processing catalyzed by ELAC2, retains the tRNA product after ELAC2 processing and presents the nascent tRNA to the mitochondrial CCA tRNA nucleotidyltransferase TRNT1 enzyme. In addition to tRNA N(1)-methyltransferase activity, TRMT10C/MRPP1 also acts as a mRNA N(1)-methyltransferase by mediating methylation of adenosine residues at the N(1) position of MT-ND5 mRNA. Associates with mitochondrial DNA complexes at the nucleoids to initiate RNA processing and ribosome assembly. In Rattus norvegicus (Rat), this protein is tRNA methyltransferase 10 homolog C.